Reading from the N-terminus, the 736-residue chain is MANLAASTCLYSWLLVLLLSSVSAIIDEDTQVYIVYMGSLSSRADYIPTSDHMSILQQVTGESSIEGRLVRSYKRSFNGFAARLTESERTLIAEIEGVVSVFPNKILQLHTTTSWDFMGVKEGKNTKRNLAIESDTIIGVIDTGIWPESKSFSDKGFGPPPKKWKGVCSGGKNFTCNNKLIGARDYTSEGTRDTSGHGTHTASTAAGNAVKDTSFFGIGNGTVRGGVPASRIAAYKVCTDSGCSSEALLSSFDDAIADGVDLITISIGFQFPSIFEDDPIAIGAFHAMAKGILTVSSAGNSGPKPTTVSHVAPWIFTVAASTTNRGFITKVVLGNGKTLAGRSVNAFDMKGKKYPLVYGKSAASSACDAKTAALCAPACLNKSRVKGKILVCGGPSGYKIAKSVGAIAIIDKSPRPDVAFTHHLPASGLKAKDFKSLVSYIESQDSPQAAVLKTETIFNRTSPVIASFSSRGPNTIAVDILKPDITAPGVEILAAFSPNGEPSEDDTRRVKYSVFSGTSMACPHVAGVAAYVKTFYPRWSPSMIQSAIMTTAWPVKAKGRGIASTEFAYGAGHVDPMAALNPGLVYELDKADHIAFLCGMNYTSKTLKIISGDTVKCSKKNKILPRNLNYPSMSAKLSGTDSTFSVTFNRTLTNVGTPNSTYKSKVVAGHGSKLSIKVTPSVLYFKTVNEKQSFSVTVTGSDVDSEVPSSANLIWSDGTHNVRSPIVVYIMVVDEA.

The N-terminal stretch at methionine 1–alanine 24 is a signal peptide. Positions isoleucine 25 to histidine 110 are cleaved as a propeptide — activation peptide. The Inhibitor I9 domain maps to valine 32–histidine 110. The region spanning serine 114–leucine 580 is the Peptidase S8 domain. Aspartate 142 serves as the catalytic Charge relay system. An N-linked (GlcNAc...) asparagine glycan is attached at asparagine 173. The active-site Charge relay system is the histidine 197. N-linked (GlcNAc...) asparagine glycans are attached at residues asparagine 220, asparagine 381, and asparagine 459. In terms of domain architecture, PA spans lysine 353–leucine 437. The active-site Charge relay system is the serine 519. Residues asparagine 601, asparagine 649, and asparagine 659 are each glycosylated (N-linked (GlcNAc...) asparagine).

It belongs to the peptidase S8 family. Post-translationally, the C-terminal propeptide is autocleaved. Specifically expressed in root stele of the root hair zone.

Its subcellular location is the secreted. This Arabidopsis thaliana (Mouse-ear cress) protein is Subtilisin-like protease SBT4.12.